A 387-amino-acid chain; its full sequence is 8-amino-7-oxononanoate synthase (387 aa).

Glycine 109–tyrosine 110 serves as a coordination point for pyridoxal 5'-phosphate. Histidine 134 is a substrate binding site. Pyridoxal 5'-phosphate is bound by residues serine 182, histidine 214, and threonine 242. The residue at position 245 (lysine 245) is an N6-(pyridoxal phosphate)lysine. Residue threonine 359 coordinates substrate.

Belongs to the class-II pyridoxal-phosphate-dependent aminotransferase family. BioF subfamily. As to quaternary structure, homodimer. Requires pyridoxal 5'-phosphate as cofactor.

The catalysed reaction is 6-carboxyhexanoyl-[ACP] + L-alanine + H(+) = (8S)-8-amino-7-oxononanoate + holo-[ACP] + CO2. Its pathway is cofactor biosynthesis; biotin biosynthesis. Catalyzes the decarboxylative condensation of pimeloyl-[acyl-carrier protein] and L-alanine to produce 8-amino-7-oxononanoate (AON), [acyl-carrier protein], and carbon dioxide. The protein is 8-amino-7-oxononanoate synthase of Haemophilus ducreyi (strain 35000HP / ATCC 700724).